The sequence spans 343 residues: tRNA-specific 2-thiouridylase MnmA (343 aa).

ATP-binding positions include 7–14 (ALSGGVDS) and methionine 33. The Nucleophile role is filled by cysteine 87. Cysteine 87 and cysteine 184 form a disulfide bridge. Residue glycine 111 participates in ATP binding. The segment at 135–137 (KDQ) is interaction with tRNA. Cysteine 184 functions as the Cysteine persulfide intermediate in the catalytic mechanism. Positions 289-290 (RY) are interaction with tRNA.

This sequence belongs to the MnmA/TRMU family.

Its subcellular location is the cytoplasm. It catalyses the reaction S-sulfanyl-L-cysteinyl-[protein] + uridine(34) in tRNA + AH2 + ATP = 2-thiouridine(34) in tRNA + L-cysteinyl-[protein] + A + AMP + diphosphate + H(+). Functionally, catalyzes the 2-thiolation of uridine at the wobble position (U34) of tRNA, leading to the formation of s(2)U34. This Desulforudis audaxviator (strain MP104C) protein is tRNA-specific 2-thiouridylase MnmA.